Here is a 342-residue protein sequence, read N- to C-terminus: MTETIKTDVLIVGAGPCGLFAVFELGLLDVKAHLVDILDKVGGQCAELYPEKPIYDIPGIPMVTGHGLTEALMEQIKPFNPTFHLSEMVENVEKIGDPGFRVTTNAGKVFECTVLVVAAGGGSFLPKRPPVPGVEAYEGTSVHYAVRKMEDFRGKDILIVGGGDSALDWTLNLNPIAKSMTLVHRRDDFRGAPHSVEQMRQLVASGKLDLKIGQITELQGDNGQLTGATVKLNDNTTSQIKCDAMLPFFGLTMKLGPVANWGLDLENNLIPVDTGTFETNVPGIFAIGDINTYPGKLKLILSGFHEGALMAQKAVKYVYPDKRVVFQYTTSSTNLQKKLGVN.

FAD-binding residues include Cys17, Asp36, Gln44, Tyr49, Val89, Phe124, Asp289, and Thr330.

This sequence belongs to the ferredoxin--NADP reductase type 2 family. As to quaternary structure, homodimer. It depends on FAD as a cofactor.

The enzyme catalyses 2 reduced [2Fe-2S]-[ferredoxin] + NADP(+) + H(+) = 2 oxidized [2Fe-2S]-[ferredoxin] + NADPH. The polypeptide is Ferredoxin--NADP reductase (Rhodopseudomonas palustris (strain ATCC BAA-98 / CGA009)).